A 580-amino-acid polypeptide reads, in one-letter code: Amino-acid acetyltransferase, mitochondrial (580 aa).

The N-acetyltransferase domain occupies 403–560 (LTMQNLFDDK…NPRHKNGVVN (158 aa)).

The protein belongs to the acetyltransferase family.

It localises to the mitochondrion. It catalyses the reaction L-glutamate + acetyl-CoA = N-acetyl-L-glutamate + CoA + H(+). The protein operates within amino-acid biosynthesis; L-arginine biosynthesis; N(2)-acetyl-L-ornithine from L-glutamate: step 1/4. Its function is as follows. N-acetylglutamate synthase involved in arginine biosynthesis. The chain is Amino-acid acetyltransferase, mitochondrial (ARG2) from Candida dubliniensis (strain CD36 / ATCC MYA-646 / CBS 7987 / NCPF 3949 / NRRL Y-17841) (Yeast).